Here is a 280-residue protein sequence, read N- to C-terminus: Thymidylate synthase (280 aa).

R21 is a dUMP binding site. H51 serves as a coordination point for (6R)-5,10-methylene-5,6,7,8-tetrahydrofolate. 142–143 is a binding site for dUMP; that stretch reads RR. Residue C162 is the Nucleophile of the active site. DUMP is bound by residues 182–185, N193, and 223–225; these read RSAD and HLY. D185 contributes to the (6R)-5,10-methylene-5,6,7,8-tetrahydrofolate binding site. A279 lines the (6R)-5,10-methylene-5,6,7,8-tetrahydrofolate pocket.

The protein belongs to the thymidylate synthase family. Bacterial-type ThyA subfamily. In terms of assembly, homodimer.

Its subcellular location is the cytoplasm. The catalysed reaction is dUMP + (6R)-5,10-methylene-5,6,7,8-tetrahydrofolate = 7,8-dihydrofolate + dTMP. The protein operates within pyrimidine metabolism; dTTP biosynthesis. Functionally, catalyzes the reductive methylation of 2'-deoxyuridine-5'-monophosphate (dUMP) to 2'-deoxythymidine-5'-monophosphate (dTMP) while utilizing 5,10-methylenetetrahydrofolate (mTHF) as the methyl donor and reductant in the reaction, yielding dihydrofolate (DHF) as a by-product. This enzymatic reaction provides an intracellular de novo source of dTMP, an essential precursor for DNA biosynthesis. This is Thymidylate synthase from Acinetobacter baylyi (strain ATCC 33305 / BD413 / ADP1).